The following is a 655-amino-acid chain: MLAAKNILNRSSLSSSFRIATRLQSTKVQGSVIGIDLGTTNSAVAIMEGKVPKIIENAEGSRTTPSVVAFTKEGERLVGIPAKRQAVVNPENTLFATKRLIGRRFEDAEVQRDIKQVPYKIVKHSNGDAWVEARGQTYSPAQIGGFVLNKMKETAEAYLGKPVKNAVVTVPAYFNDSQRQATKDAGQIVGLNVLRVVNEPTAAALAYGLEKSDSKVVAVFDLGGGTFDISILDIDNGVFEVKSTNGDTHLGGEDFDIYLLREIVSRFKTETGIDLENDRMAIQRIREAAEKAKIELSSTVSTEINLPFITADASGPKHINMKFSRAQFETLTAPLVKRTVDPVKKALKDAGLSTSDISEVLLVGGMSRMPKVVETVKSLFGKDPSKAVNPDEAVAIGAAVQGAVLSGEVTDVLLLDVTPLSLGIETLGGVFTRLIPRNTTIPTKKSQIFSTAAAGQTSVEIRVFQGERELVRDNKLIGNFTLAGIPPAPKGVPQIEVTFDIDADGIINVSARDKATNKDSSITVAGSSGLSENEIEQMVNDAEKFKSQDEARKQAIETANKADQLANDTENSLKEFEGKVDKAEAQKVRDQITSLKELVARVQGGEEVNAEELKTKTEELQTSSMKLFEQLYKNDSNNNNNNNNGNNAESDETKQ.

The N-terminal 23 residues, 1-23 (MLAAKNILNRSSLSSSFRIATRL), are a transit peptide targeting the mitochondrion. Residue threonine 330 is modified to Phosphothreonine. The disordered stretch occupies residues 629 to 655 (EQLYKNDSNNNNNNNNGNNAESDETKQ). Residues 637–647 (NNNNNNNNGNN) are compositionally biased toward low complexity.

It belongs to the heat shock protein 70 family. As to quaternary structure, component of the PAM complex, at least composed of SSC1 (mtHsp70), MGE1, TIM44, PAM16/TIM16, PAM17 and PAM18/TIM14. In the complex, SSC1 interacts directly with PAM18 and TIM44. Interacts with NAP1. Component of endonuclease SceI (endo.SceI), which is a heterodimer of ENS2 and SSC1.

The protein localises to the mitochondrion matrix. The enzyme catalyses ATP + H2O = ADP + phosphate + H(+). Its function is as follows. Essential component of the PAM complex, a complex required for the translocation of transit peptide-containing proteins from the inner membrane into the mitochondrial matrix in an ATP-dependent manner. Constitutes the ATP-driven core of the motor and binds the precursor preprotein. Required for the import of the processed frataxin homolog YFH1 into the mitochondrion. In terms of biological role, acts as a non-catalytic component of endonuclease SceI (endo.SceI), which cleaves specifically at multiple sites on mitochondrial DNA and produces double-stranded breaks. SSC1 confers broader sequence specificity, greater stability, and higher activity on the catalytic subunit. This is Import motor subunit, mitochondrial from Saccharomyces cerevisiae (Baker's yeast).